The following is a 420-amino-acid chain: Gamma-glutamyl phosphate reductase (420 aa).

It belongs to the gamma-glutamyl phosphate reductase family.

It is found in the cytoplasm. It catalyses the reaction L-glutamate 5-semialdehyde + phosphate + NADP(+) = L-glutamyl 5-phosphate + NADPH + H(+). The protein operates within amino-acid biosynthesis; L-proline biosynthesis; L-glutamate 5-semialdehyde from L-glutamate: step 2/2. Functionally, catalyzes the NADPH-dependent reduction of L-glutamate 5-phosphate into L-glutamate 5-semialdehyde and phosphate. The product spontaneously undergoes cyclization to form 1-pyrroline-5-carboxylate. In Oenococcus oeni (strain ATCC BAA-331 / PSU-1), this protein is Gamma-glutamyl phosphate reductase.